Consider the following 75-residue polypeptide: Conotoxin Vc6a (75 aa).

A signal peptide spans 1–22 (MKLTCVVIVAVLFLTANTFATA). Residues 23–49 (DDPRNGLENLFLKAHHEMNPEASKLNE) constitute a propeptide that is removed on maturation. 3 disulfide bridges follow: C51/C66, C58/C69, and C65/C74.

In terms of tissue distribution, expressed by the venom duct.

It is found in the secreted. In Conus victoriae (Queen Victoria cone), this protein is Conotoxin Vc6a.